The primary structure comprises 297 residues: Ectoine dioxygenase (297 aa).

Glutamine 131 contributes to the L-ectoine binding site. Lysine 137 serves as a coordination point for 2-oxoglutarate. Fe cation is bound by residues histidine 148, aspartate 150, and histidine 249.

This sequence belongs to the PhyH family. EctD subfamily. As to quaternary structure, homodimer. It depends on Fe(2+) as a cofactor.

The catalysed reaction is L-ectoine + 2-oxoglutarate + O2 = 5-hydroxyectoine + succinate + CO2. In terms of biological role, involved in the biosynthesis of 5-hydroxyectoine, called compatible solute, which helps organisms to survive extreme osmotic stress by acting as a highly soluble organic osmolyte. Catalyzes the 2-oxoglutarate-dependent selective hydroxylation of L-ectoine to yield (4S,5S)-5-hydroxyectoine. This chain is Ectoine dioxygenase, found in Streptomyces anulatus (Streptomyces chrysomallus).